Consider the following 549-residue polypeptide: MTLASIRRGYHVIKTLLQYGLDDVLPPKMTPWYFKLARNSLFWIRNKHKGKSGGERLKLAMQELGPVYIKLGQMLSTRRDLLSDEWANELAMLQDKVPPFDGALARQAIEAELKAPIESFFDDFNETPLASASISQVHTATLKSNGKAVVLKVLRPNVEAKIQADLLLMSQTAKVIDYLLGEGNRLRPSEVIEDYRVTILGELNLKLEALNAIKLRNNFLDSDALYIPYVYEEFCYPRLMVMERIYGIPVSDIAALKAQGTNFKLLAERGVELFFTQVFRDNFFHADMHPGNIFISRDHPENPYYIGLDCGIMGTLSEVDKRYLAENFLAFFNRDYHRIAQLYIESGWVSEKTDLQAFEQAIKVVCEPMFNKPLDEISFGHVLLELFRTARHFDIVVQPQLVLLEKTLLYIEGLGRQLYPQLDLWQTAKPFLEQWMAEQVGPKAMFKKVSTKLPYWSDKLPEFPELIYDNLKLGRKLLSSQQQMLDKYLKYQQQAHKSNYLLITSAILLICGTLLFNQDATLWSPYVCLISGAALWIIGWRSRPKNRKF.

The Protein kinase domain occupies 123–501 (DFNETPLASA…QQQAHKSNYL (379 aa)). Residues 129-137 (LASASISQV) and Lys-152 contribute to the ATP site. Asp-287 (proton acceptor) is an active-site residue. 2 consecutive transmembrane segments (helical) span residues 498-518 (SNYLLITSAILLICGTLLFNQ) and 520-540 (ATLWSPYVCLISGAALWIIGW).

Belongs to the ABC1 family. UbiB subfamily.

Its subcellular location is the cell inner membrane. It functions in the pathway cofactor biosynthesis; ubiquinone biosynthesis [regulation]. Functionally, is probably a protein kinase regulator of UbiI activity which is involved in aerobic coenzyme Q (ubiquinone) biosynthesis. In Shewanella sp. (strain MR-7), this protein is Probable protein kinase UbiB.